We begin with the raw amino-acid sequence, 1309 residues long: DNA repair protein RAD9 (1309 aa).

The span at 1–19 shows a compositional bias: polar residues; it reads MSGQLVQWKSSPDRVTQSA. Residues 1–39 form a disordered region; the sequence is MSGQLVQWKSSPDRVTQSAIKEALHSPLADGDMNEMNVP. Phosphoserine occurs at positions 26, 56, and 205. Position 218 is a phosphothreonine (threonine 218). Serine 248 bears the Phosphoserine mark. Positions 280-299 are disordered; that stretch reads NIGAIEEKNPVKKKSENYSS. The segment covering 284-299 has biased composition (basic and acidic residues); sequence IEEKNPVKKKSENYSS. A phosphoserine mark is found at serine 312 and serine 315. The interval 342–365 is disordered; it reads NSAVSGTPSRNNAEEEMYSSESVN. Polar residues predominate over residues 343–352; the sequence is SAVSGTPSRN. Phosphoserine is present on serine 462. A phosphothreonine mark is found at threonine 471 and threonine 474. The disordered stretch occupies residues 490–512; sequence PETSSPSKNTMSKPSNSSPIPKE. The segment covering 491–508 has biased composition (polar residues); sequence ETSSPSKNTMSKPSNSSP. Residue serine 568 is modified to Phosphoserine. 2 disordered regions span residues 636-655 and 691-731; these read KGNS…DKQD and IIQN…NSDL. Positions 642–655 are enriched in basic and acidic residues; the sequence is LHDDNKECNSDKQD. Residue serine 729 is modified to Phosphoserine. Positions 994 to 1122 constitute a BRCT domain; that stretch reads RTGNVFDKCI…RIVPHLIYQY (129 aa).

Physically associates with RAD53.

Its subcellular location is the nucleus. Functionally, essential for cell cycle arrest at the G2 stage following DNA damage by X-irradiation or inactivation of DNA ligase. The polypeptide is DNA repair protein RAD9 (RAD9) (Saccharomyces cerevisiae (strain ATCC 204508 / S288c) (Baker's yeast)).